The sequence spans 113 residues: Beta-microseminoprotein (113 aa).

A signal peptide spans 1 to 20 (MEAWLGSLLFLATMVIASKA). 5 disulfide bridges follow: C22–C69, C38–C61, C56–C92, C59–C68, and C83–C106.

This sequence belongs to the beta-microseminoprotein family. As to quaternary structure, homodimer; Interacts with PI16.

The protein localises to the secreted. This chain is Beta-microseminoprotein (Msmb), found in Mus musculus (Mouse).